The sequence spans 93 residues: Integration host factor subunit beta (93 aa).

Belongs to the bacterial histone-like protein family. As to quaternary structure, heterodimer of an alpha and a beta chain.

Functionally, this protein is one of the two subunits of integration host factor, a specific DNA-binding protein that functions in genetic recombination as well as in transcriptional and translational control. This chain is Integration host factor subunit beta, found in Cereibacter sphaeroides (strain KD131 / KCTC 12085) (Rhodobacter sphaeroides).